A 245-amino-acid chain; its full sequence is Retrovirus-related Pol polyprotein from type-1 retrotransposable element R1 (245 aa).

Residues 1–105 (LKDGTGIVAA…VDLETYCNKA (105 aa)) enclose the Reverse transcriptase domain. Residues 106 to 245 (EVRQKFREKE…IVRDDSNLEQ (140 aa)) are nucleic acid-binding endonuclease.

The catalysed reaction is DNA(n) + a 2'-deoxyribonucleoside 5'-triphosphate = DNA(n+1) + diphosphate. In Popillia japonica (Japanese beetle), this protein is Retrovirus-related Pol polyprotein from type-1 retrotransposable element R1.